The primary structure comprises 348 residues: tRNA pseudouridine synthase D (348 aa).

Asp78 serves as the catalytic Nucleophile. Positions 150–304 constitute a TRUD domain; that stretch reads GLPNFFGPQR…AEGTRRAARL (155 aa).

This sequence belongs to the pseudouridine synthase TruD family.

It carries out the reaction uridine(13) in tRNA = pseudouridine(13) in tRNA. Its function is as follows. Responsible for synthesis of pseudouridine from uracil-13 in transfer RNAs. The protein is tRNA pseudouridine synthase D of Anaeromyxobacter dehalogenans (strain 2CP-1 / ATCC BAA-258).